Reading from the N-terminus, the 1381-residue chain is Regulator of G-protein signaling 12 (1381 aa).

Positions 21–98 (SVEVARGRAG…VLHMVIAEGT (78 aa)) constitute a PDZ domain. 2 positions are modified to phosphoserine: Ser-171 and Ser-194. Residue Lys-195 forms a Glycyl lysine isopeptide (Lys-Gly) (interchain with G-Cter in SUMO2) linkage. The PID domain maps to 223-390 (SILNVAMVVG…VLQFISVLYR (168 aa)). 3 disordered regions span residues 409–428 (ADAH…IGNF), 442–528 (LGGG…GAAG), and 620–644 (RKTK…SQRT). Positions 412–428 (HQNNSTSSNSDSGIGNF) are enriched in polar residues. Residues Arg-524 and Arg-633 each carry the omega-N-methylarginine modification. A phosphoserine mark is found at Ser-661 and Ser-671. Residues 715 to 832 (SFERLLQDPV…LKSQLYQECV (118 aa)) form the RGS domain. Residues 842–942 (PDSQQVPSSP…ESQGSVSSAG (101 aa)) form a disordered region. The span at 849–869 (SSPASKHSISSDHSNVSTPKK) shows a compositional bias: low complexity. Phosphoserine is present on residues Ser-850 and Ser-879. The span at 914 to 923 (DHGDHAHDAP) shows a compositional bias: basic and acidic residues. Ser-943 carries the phosphoserine modification. RBD domains are found at residues 962 to 1032 (KHCC…LEKR) and 1034 to 1104 (LFRL…LEER). Over residues 1102 to 1117 (EERDPSRGKVSTDKQK) the composition is skewed to basic and acidic residues. Positions 1102 to 1169 (EERDPSRGKV…RDPRLSKREE (68 aa)) are disordered. Polar residues predominate over residues 1122–1132 (KQNSAVNSSPR). The span at 1151 to 1169 (IRGENGKSARDPRLSKREE) shows a compositional bias: basic and acidic residues. The 23-residue stretch at 1187–1209 (AEEFFELISKAQSNRADDQRGLL) folds into the GoLoco domain. Disordered stretches follow at residues 1227-1318 (SELA…QEGT) and 1347-1381 (LMGE…TSRF). Positions 1261–1280 (SDSPATSPASAQSPCSAYSP) are enriched in low complexity. The segment covering 1361–1381 (LPPPPTPQDTPGPPRPGTSRF) has biased composition (pro residues).

As to quaternary structure, interacts with GNAI1, GNAI2 and GNAI3; the interactions are GDP-dependent. In terms of tissue distribution, expressed in brain.

Its subcellular location is the nucleus. The protein resides in the cytoplasm. It localises to the cell projection. It is found in the dendrite. The protein localises to the synapse. Functionally, regulates G protein-coupled receptor signaling cascades. Inhibits signal transduction by increasing the GTPase activity of G protein alpha subunits, thereby driving them into their inactive GDP-bound form. The sequence is that of Regulator of G-protein signaling 12 (Rgs12) from Mus musculus (Mouse).